Reading from the N-terminus, the 1248-residue chain is Structural polyprotein (1248 aa).

Polar residues predominate over residues 1 to 10; it reads MEFIPTQTFY. A disordered region spans residues 1–104; the sequence is MEFIPTQTFY…KKKKPGRRER (104 aa). A compositionally biased stretch (low complexity) spans 22-44; it reads RPTIQVIRPRPRPQRQAGQLAQL. The interval 36–68 is host transcription inhibition; sequence RQAGQLAQLISAVNKLTMRAVPQQKPRRNRKNK. Positions 60 to 72 are enriched in basic residues; that stretch reads KPRRNRKNKKQKQ. Residues 61–99 carry the Nuclear localization signal motif; the sequence is PRRNRKNKKQKQKQQAPQNNTNQKKQPPKKKPAQKKKKP. A compositionally biased stretch (low complexity) spans 73–85; the sequence is KQQAPQNNTNQKK. Positions 84–114 are binding to the viral RNA; it reads KKQPPKKKPAQKKKKPGRRERMCMKIENDCI. Over residues 86 to 101 the composition is skewed to basic residues; the sequence is QPPKKKPAQKKKKPGR. Residues 99 to 113 are ribosome-binding; the sequence is PGRRERMCMKIENDC. C113 and C128 form a disulfide bridge. The region spanning 113 to 261 is the Peptidase S3 domain; the sequence is CIFEVKHEGK…KITPEGAEEW (149 aa). The active-site Charge relay system is the H139. Residues 144 to 154 carry the Nuclear export signal motif; it reads IDNADLAKLAF. The interval 155–160 is interaction with spike glycoprotein E2; the sequence is KRSSKY. D161 functions as the Charge relay system in the catalytic mechanism. Positions 183 to 193 are dimerization of the capsid protein; that stretch reads PEGYYNWHHGA. Catalysis depends on S213, which acts as the Charge relay system. The interval 219–223 is dimerization of the capsid protein; sequence DNKGR. The functions as an uncleaved signal peptide for the precursor of protein E3/E2 stretch occupies residues 262 to 274; sequence SLAIPVMCLLANT. Topologically, residues 262-692 are extracellular; sequence SLAIPVMCLL…YYYELYPTMT (431 aa). Intrachain disulfides connect C269-C278, C283-C287, C286-C318, C344-C450, C347-C353, C416-C430, C478-C591, C526-C550, and C528-C545. N-linked (GlcNAc...) asparagine; by host glycosylation occurs at N273. 2 interaction with host Mxra8 receptor regions span residues 351 to 354 and 387 to 389; these read HSCH and HDW. 2 interaction with host Mxra8 receptor regions span residues 509 to 512 and 541 to 547; these read QSGN and VINNCKV. N-linked (GlcNAc...) asparagine; by host glycosylation is found at N588 and N670. A helical membrane pass occupies residues 693-713; sequence VVVVSVASFILLSMVGMAVGM. Topologically, residues 714–748 are cytoplasmic; sequence CMCARRRCITPYELTPGATVPFLLSLICCIRTAKA. The segment at 716-720 is interaction with the capsid protein; it reads CARRR. 3 S-palmitoyl cysteine; by host lipidation sites follow: C721, C741, and C742. Positions 721–741 are transient transmembrane before p62-6K protein processing; it reads CITPYELTPGATVPFLLSLIC. Residues C721 and C742 are joined by a disulfide bond. The Extracellular portion of the chain corresponds to 749–763; the sequence is ATYQEAAVYLWNEQQ. A helical transmembrane segment spans residues 764-784; sequence PLFWLQALIPLAALIVLCNCL. Residues 785–795 lie on the Cytoplasmic side of the membrane; it reads RLLPCCCKTLA. A helical transmembrane segment spans residues 796–816; the sequence is FLAVMSIGAHTVSAYEHVTVI. The Extracellular portion of the chain corresponds to 817–1224; it reads PNTVGVPYKT…AMSWVQKITG (408 aa). Disulfide bonds link C858–C923, C871–C903, C872–C905, and C877–C887. Residues 893–910 are E1 fusion peptide loop; the sequence is VYPFMWGGAYCFCDAENT. N-linked (GlcNAc...) asparagine; by host glycosylation is found at N950 and N1079. Disulfide bonds link C1068-C1080, C1110-C1185, C1115-C1189, and C1137-C1179. A helical transmembrane segment spans residues 1225–1245; the sequence is GVGLVVAVAALILIVVLCVSF. C1242 is lipidated: S-palmitoyl cysteine; by host. C1242 is lipidated: S-stearoyl cysteine; by host. Topologically, residues 1246–1248 are cytoplasmic; sequence SRH.

It belongs to the alphavirus structural polyprotein family. Homodimer. Homomultimer. Interacts with host karyopherin KPNA4; this interaction allows the nuclear import of the viral capsid protein. Interacts with spike glycoprotein E2. Interacts with host IRAK1; the interaction leads to inhibition of IRAK1-dependent signaling. As to quaternary structure, the precursor of protein E3/E2 and E1 form a heterodimer shortly after synthesis. In terms of assembly, interacts with spike glycoprotein E2. The precursor of protein E3/E2 and E1 form a heterodimer shortly after synthesis. Processing of the precursor of protein E3/E2 into E2 and E3 results in a heterodimer of the spike glycoproteins E2 and E1. Spike at virion surface are constituted of three E2-E1 heterodimers. After target cell attachment and endocytosis, E1 changes conformation to form homotrimers. Interacts with 6K protein. Interacts with host MXRA8; this interaction mediates virus entry. The interaction involves 2 adjacent E2-E1 heterodimers. Interacts with spike glycoprotein E1. Processing of the precursor of protein E3/E2 into E2 and E3 results in a heterodimer of the spike glycoproteins E2 and E1. Spike at virion surface are constituted of a trimer of E2-E1 heterodimers. Interacts with 6K protein. Interacts with host MXRA8; this interaction mediates virus entry. The interaction involves 2 adjacent E2-E1 heterodimers. As to quaternary structure, oligomer. Interacts with spike glycoprotein E1. Interacts with spike glycoprotein E2. Post-translationally, specific enzymatic cleavages in vivo yield mature proteins. Capsid protein is auto-cleaved during polyprotein translation, unmasking a signal peptide at the N-terminus of the precursor of E3/E2. The remaining polyprotein is then targeted to the host endoplasmic reticulum, where host signal peptidase cleaves it into pE2, 6K and E1 proteins. pE2 is further processed to mature E3 and E2 by host furin in trans-Golgi vesicle. In terms of processing, palmitoylated via thioester bonds. These palmitoylations may induce disruption of the C-terminus transmembrane. This would result in the reorientation of E2 C-terminus from lumenal to cytoplasmic side. N-glycosylated. Post-translationally, palmitoylated via thioester bonds.

It is found in the virion. The protein localises to the host cytoplasm. It localises to the host cell membrane. The protein resides in the host nucleus. Its subcellular location is the virion membrane. It is found in the host Golgi apparatus. The protein localises to the host trans-Golgi network. It localises to the host endoplasmic reticulum. The enzyme catalyses Autocatalytic release of the core protein from the N-terminus of the togavirus structural polyprotein by hydrolysis of a -Trp-|-Ser- bond.. Forms an icosahedral capsid with a T=4 symmetry composed of 240 copies of the capsid protein surrounded by a lipid membrane through which penetrate 80 spikes composed of trimers of E1-E2 heterodimers. The capsid protein binds to the viral RNA genome at a site adjacent to a ribosome binding site for viral genome translation following genome release. Possesses a protease activity that results in its autocatalytic cleavage from the nascent structural protein. Following its self-cleavage, the capsid protein transiently associates with ribosomes, and within several minutes the protein binds to viral RNA and rapidly assembles into icosahedric core particles. The resulting nucleocapsid eventually associates with the cytoplasmic domain of the spike glycoprotein E2 at the cell membrane, leading to budding and formation of mature virions. In case of infection, new virions attach to target cells and after clathrin-mediated endocytosis their membrane fuses with the host endosomal membrane. This leads to the release of the nucleocapsid into the cytoplasm, followed by an uncoating event necessary for the genomic RNA to become accessible. The uncoating might be triggered by the interaction of capsid proteins with ribosomes. Binding of ribosomes would release the genomic RNA since the same region is genomic RNA-binding and ribosome-binding. Specifically inhibits interleukin-1 receptor-associated kinase 1/IRAK1-dependent signaling during viral entry, representing a means by which the alphaviruses may evade innate immune detection and activation prior to viral gene expression. Degrades host cyclic GMP-AMP synthase (CGAS) thereby inhibiting the cGAS-STING pathway. Functionally, provides the signal sequence for the translocation of the precursor of protein E3/E2 to the host endoplasmic reticulum. Furin-cleaved E3 remains associated with spike glycoprotein E1 and mediates pH protection of the latter during the transport via the secretory pathway. After virion release from the host cell, the assembly protein E3 is gradually released in the extracellular space. In terms of biological role, plays a role in viral attachment to target host cell, by binding to the cell receptor MXRA8. Synthesized as a p62 precursor which is processed by furin at the cell membrane just before virion budding, giving rise to E2-E1 heterodimer. The p62-E1 heterodimer is stable, whereas E2-E1 is unstable and dissociate at low pH. p62 is processed at the last step, presumably to avoid E1 fusion activation before its final export to cell surface. E2 C-terminus contains a transitory transmembrane that would be disrupted by palmitoylation, resulting in reorientation of the C-terminal tail from lumenal to cytoplasmic side. This step is critical since E2 C-terminus is involved in budding by interacting with capsid proteins. This release of E2 C-terminus in cytoplasm occurs lately in protein export, and precludes premature assembly of particles at the endoplasmic reticulum membrane. Its function is as follows. Acts as a viroporin that participates in virus glycoprotein processing and transport to the plasma membrane, cell permeabilization and budding of viral particles. Disrupts the calcium homeostasis of the cell, probably at the endoplasmic reticulum level. This leads to cytoplasmic calcium elevation. Because of its lipophilic properties, the 6K protein is postulated to influence the selection of lipids that interact with the transmembrane domains of the glycoproteins, which, in turn, affects the deformability of the bilayer required for the extreme curvature that occurs as budding proceeds. Present in low amount in virions, about 3% compared to viral glycoproteins. Class II viral fusion protein. Fusion activity is inactive as long as E1 is bound to E2 in mature virion. After virus attachment to target cell and endocytosis, acidification of the endosome induce dissociation of E1/E2 heterodimer and concomitant trimerization of the E1 subunits. This E1 trimer is fusion active, and promotes release of viral nucleocapsid in cytoplasm after endosome and viral membrane fusion. Efficient fusion requires the presence of cholesterol and sphingolipid in the target membrane. This Chikungunya virus (strain S27-African prototype) (CHIKV) protein is Structural polyprotein.